The primary structure comprises 145 residues: D-aminoacyl-tRNA deacylase (145 aa).

The Gly-cisPro motif, important for rejection of L-amino acids motif lies at 137 to 138; the sequence is GP.

This sequence belongs to the DTD family. As to quaternary structure, homodimer.

The protein resides in the cytoplasm. The enzyme catalyses glycyl-tRNA(Ala) + H2O = tRNA(Ala) + glycine + H(+). It carries out the reaction a D-aminoacyl-tRNA + H2O = a tRNA + a D-alpha-amino acid + H(+). Its function is as follows. An aminoacyl-tRNA editing enzyme that deacylates mischarged D-aminoacyl-tRNAs. Also deacylates mischarged glycyl-tRNA(Ala), protecting cells against glycine mischarging by AlaRS. Acts via tRNA-based rather than protein-based catalysis; rejects L-amino acids rather than detecting D-amino acids in the active site. By recycling D-aminoacyl-tRNA to D-amino acids and free tRNA molecules, this enzyme counteracts the toxicity associated with the formation of D-aminoacyl-tRNA entities in vivo and helps enforce protein L-homochirality. This is D-aminoacyl-tRNA deacylase from Shewanella baltica (strain OS195).